We begin with the raw amino-acid sequence, 114 residues long: rRNA-processing protein cgrA (114 aa).

Low complexity predominate over residues 1–13 (MSSAAPAPSTHAA). Disordered stretches follow at residues 1–47 (MSSA…AARK) and 77–114 (RRAA…LLNS). Residues 40 to 101 (TKRAAARKEQ…EKMHRKRVER (62 aa)) adopt a coiled-coil conformation. The segment covering 77 to 93 (RRAAKEEKERYEKMAEK) has biased composition (basic and acidic residues). A compositionally biased stretch (basic residues) spans 94–114 (MHRKRVERLKKREKRNKLLNS).

Belongs to the CGR1 family.

It localises to the nucleus. The protein resides in the nucleolus. Involved in nucleolar integrity and required for processing of the pre-rRNA for the 60S ribosome subunit. The chain is rRNA-processing protein cgrA (cgrA) from Emericella nidulans (strain FGSC A4 / ATCC 38163 / CBS 112.46 / NRRL 194 / M139) (Aspergillus nidulans).